The sequence spans 135 residues: Single-stranded DNA-binding protein RIM1, mitochondrial (135 aa).

Residues Met-1–Met-17 constitute a mitochondrion transit peptide. The SSB domain occupies Phe-19–Lys-117.

As to quaternary structure, homotetramer. Interacts with PIF1.

The protein resides in the mitochondrion. Its function is as follows. This protein binds preferentially and cooperatively to single-stranded DNA (ssDNS). Involved in mitochondrial DNA replication. Stimulates PIF1 helicase activity. The protein is Single-stranded DNA-binding protein RIM1, mitochondrial (RIM1) of Saccharomyces cerevisiae (strain ATCC 204508 / S288c) (Baker's yeast).